A 476-amino-acid polypeptide reads, in one-letter code: Serine/threonine-protein kinase Chk1 (476 aa).

Residues 1–265 (MAVPFVEDWD…IPDIKKDRWY (265 aa)) are interaction with CLSPN. In terms of domain architecture, Protein kinase spans 9–265 (WDLVQTLGEG…IPDIKKDRWY (257 aa)). Residues 15–23 (LGEGAYGEV) and K38 each bind ATP. D130 acts as the Proton acceptor in catalysis. K132 is covalently cross-linked (Glycyl lysine isopeptide (Lys-Gly) (interchain with G-Cter in ubiquitin)). The disordered stretch occupies residues 267 to 329 (KPLNRGAKRP…EPRTGLSLWD (63 aa)). A Phosphoserine; by PKB/AKT1 modification is found at S280. The segment covering 280-291 (SGGMSESSSGFS) has biased composition (low complexity). Phosphoserine is present on residues S286, S296, and S301. Positions 298–320 (LDFSPINSGSSEENVKFSSSQPE) are enriched in polar residues. S317 and S345 each carry phosphoserine; by ATM and ATR. The interval 391-476 (QCLKETFEKL…SSQKVWFPVT (86 aa)) is autoinhibitory region. K436 is covalently cross-linked (Glycyl lysine isopeptide (Lys-Gly) (interchain with G-Cter in ubiquitin)). 3 positions are modified to phosphoserine: S463, S467, and S468.

It belongs to the protein kinase superfamily. CAMK Ser/Thr protein kinase family. NIM1 subfamily. In terms of assembly, interacts (phosphorylated by ATR) with RAD51. Interacts with and phosphorylates CLSPN, an adapter protein that regulates the ATR-dependent phosphorylation of CHEK1. Interacts with BRCA1. Interacts with and phosphorylates CDC25A, CDC25B and CDC25C. Interacts with FBXO6, which regulates CHEK1. Interacts with PPM1D, which regulates CHEK1 through dephosphorylation. Interacts with TIMELESS; DNA damage-dependent. Interacts with FEM1B; activates CHEK1 in response to stress. Interacts with TLK1. Interacts with XPO1 and YWHAZ. Interacts with CDK5RAP3; antagonizes CHEK1. In terms of processing, phosphorylated by ATR in a RAD17-dependent manner in response to ultraviolet irradiation and inhibition of DNA replication. Phosphorylated by ATM in response to ionizing irradiation. ATM and ATR can both phosphorylate Ser-317 and Ser-345 and this results in enhanced kinase activity. Phosphorylation at Ser-345 induces a change in the conformation of the protein, activates the kinase activity and is a prerequisite for interaction with FBXO6 and subsequent ubiquitination at Lys-436. Phosphorylation at Ser-345 also increases binding to 14-3-3 proteins and promotes nuclear retention. Conversely, dephosphorylation at Ser-345 by PPM1D may contribute to exit from checkpoint mediated cell cycle arrest. Phosphorylation at Ser-280 by AKT1/PKB, may promote mono and/or diubiquitination. Also phosphorylated at undefined residues during mitotic arrest, resulting in decreased activity. Ubiquitinated. Mono or diubiquitination promotes nuclear exclusion. The activated form (phosphorylated on Ser-345) is polyubiquitinated at Lys-436 by some SCF-type E3 ubiquitin ligase complex containing FBXO6 promoting its degradation. Ubiquitination and degradation are required to terminate the checkpoint and ensure that activated CHEK1 does not accumulate as cells progress through S phase, when replication forks encounter transient impediments during normal DNA replication. 'Lys-63'-mediated ubiquitination by TRAF4 at Lys-132 activates cell cycle arrest and activation of DNA repair. Post-translationally, proteolytically cleaved at the C-terminus by SPRTN during normal DNA replication, thereby promoting CHEK1 removal from chromatin and activating the protein kinase activity. As to expression, expressed in brain, heart, liver, lung, skeletal muscle, spleen and testis. Expressed only in liver.

It localises to the nucleus. The protein localises to the chromosome. The protein resides in the cytoplasm. Its subcellular location is the cytoskeleton. It is found in the microtubule organizing center. It localises to the centrosome. The catalysed reaction is L-seryl-[protein] + ATP = O-phospho-L-seryl-[protein] + ADP + H(+). It catalyses the reaction L-threonyl-[protein] + ATP = O-phospho-L-threonyl-[protein] + ADP + H(+). With respect to regulation, activated through phosphorylation predominantly by ATR but also by ATM in response to DNA damage or inhibition of DNA replication. Activation is modulated by several mediators including CLSPN, BRCA1 and FEM1B. Proteolytic cleavage at the C-terminus by SPRTN during normal DNA replication activates the protein kinase activity. Functionally, serine/threonine-protein kinase which is required for checkpoint-mediated cell cycle arrest and activation of DNA repair in response to the presence of DNA damage or unreplicated DNA. May also negatively regulate cell cycle progression during unperturbed cell cycles. This regulation is achieved by a number of mechanisms that together help to preserve the integrity of the genome. Recognizes the substrate consensus sequence [R-X-X-S/T]. Binds to and phosphorylates CDC25A, CDC25B and CDC25C. Phosphorylation of CDC25A at 'Ser-178' and 'Thr-507' and phosphorylation of CDC25C at 'Ser-216' creates binding sites for 14-3-3 proteins which inhibit CDC25A and CDC25C. Phosphorylation of CDC25A at 'Ser-76', 'Ser-124', 'Ser-178', 'Ser-279' and 'Ser-293' promotes proteolysis of CDC25A. Phosphorylation of CDC25A at 'Ser-76' primes the protein for subsequent phosphorylation at 'Ser-79', 'Ser-82' and 'Ser-88' by NEK11, which is required for polyubiquitination and degradation of CDCD25A. Inhibition of CDC25 leads to increased inhibitory tyrosine phosphorylation of CDK-cyclin complexes and blocks cell cycle progression. Also phosphorylates NEK6. Binds to and phosphorylates RAD51 at 'Thr-309', which promotes the release of RAD51 from BRCA2 and enhances the association of RAD51 with chromatin, thereby promoting DNA repair by homologous recombination. Phosphorylates multiple sites within the C-terminus of TP53, which promotes activation of TP53 by acetylation and promotes cell cycle arrest and suppression of cellular proliferation. Also promotes repair of DNA cross-links through phosphorylation of FANCE. Binds to and phosphorylates TLK1 at 'Ser-743', which prevents the TLK1-dependent phosphorylation of the chromatin assembly factor ASF1A. This may enhance chromatin assembly both in the presence or absence of DNA damage. May also play a role in replication fork maintenance through regulation of PCNA. May regulate the transcription of genes that regulate cell-cycle progression through the phosphorylation of histones. Phosphorylates histone H3.1 (to form H3T11ph), which leads to epigenetic inhibition of a subset of genes. May also phosphorylate RB1 to promote its interaction with the E2F family of transcription factors and subsequent cell cycle arrest. Phosphorylates SPRTN, promoting SPRTN recruitment to chromatin. Reduces replication stress and activates the G2/M checkpoint, by phosphorylating and inactivating PABIR1/FAM122A and promoting the serine/threonine-protein phosphatase 2A-mediated dephosphorylation and stabilization of WEE1 levels and activity. This chain is Serine/threonine-protein kinase Chk1 (Chek1), found in Rattus norvegicus (Rat).